We begin with the raw amino-acid sequence, 145 residues long: Mitochondrial import receptor subunit TOM20 homolog (145 aa).

The Mitochondrial intermembrane portion of the chain corresponds to 1–6 (MVGRNS). The chain crosses the membrane as a helical span at residues 7–24 (AIAAGVCGALFIGYCIYF). The Cytoplasmic segment spans residues 25–145 (DRKRRSDPNF…AQSLAEDDVE (121 aa)). Glycyl lysine isopeptide (Lys-Gly) (interchain with G-Cter in ubiquitin) cross-links involve residues K35, K56, K61, and K68. Residues S135 and S138 each carry the phosphoserine modification.

Belongs to the Tom20 family. Forms part of the preprotein translocase complex of the outer mitochondrial membrane (TOM complex) which consists of at least 7 different proteins (TOMM5, TOMM6, TOMM7, TOMM20, TOMM22, TOMM40 and TOMM70). Interacts with TOM22. Interacts with APEX1. Interacts with TBC1D21. Upon mitochondrial depolarization, interacts with PINK1; the interaction is required for PINK1-TOM-TIM23 supercomplex formation which is critical for PINK1 stabilization at the outer mitochondrial membrane, kinase activation and downstream mitophagy. Ubiquitinated by PRKN during mitophagy, leading to its degradation and enhancement of mitophagy. Deubiquitinated by USP30. Expressed in brain, kidney, stomach, colon, jejunum, ileum, testis, ovary and oviduct (at protein level). In the brain, expressed in neural cells of the cerebrum and cerebellum (at protein level). In the kidney, expressed in the proximal to distal tubule in the cortex and the outer and inner zones of the medulla (at protein level). In the stomach, expressed in the basal layer of stratified squamous epithelia in the forestomach and in the gastric pit and fundic gland of the glandular stomach (at protein level). Expressed in epithelial cells of the jejunum, ileum, and colon (at protein level). In the testis, expressed by spermatocytes and spermatogonia (at protein level). In the ovaries, expressed by follicular epithelial cells and corpus luteum cells (at protein level). In the oviduct, expressed in the epithelia of the isthmus and the ciliated cells of the ampulla (at protein level). Expressed in the sperm midpiece (at protein level).

It is found in the mitochondrion outer membrane. Central component of the receptor complex responsible for the recognition and translocation of cytosolically synthesized mitochondrial preproteins. Together with TOM22 functions as the transit peptide receptor at the surface of the mitochondrion outer membrane and facilitates the movement of preproteins into the TOM40 translocation pore. Required for the translocation across the mitochondrial outer membrane of cytochrome P450 monooxygenases. This chain is Mitochondrial import receptor subunit TOM20 homolog (Tomm20), found in Mus musculus (Mouse).